The primary structure comprises 428 residues: Flotillin-1 (428 aa).

Ser19, Ser163, and Ser385 each carry phosphoserine. Thr387 carries the phosphothreonine modification.

Belongs to the band 7/mec-2 family. Flotillin subfamily. Heterooligomeric complex of flotillin-1 and flotillin-2 and caveolin-1 and caveolin-2. Interacts with ECPAS. In terms of tissue distribution, high expression in brain, white adipose tissue, heart muscle, skeletal muscle and lung. Low expression in spleen, liver and testis.

The protein resides in the cell membrane. Its subcellular location is the endosome. It localises to the membrane. It is found in the caveola. The protein localises to the melanosome. The protein resides in the membrane raft. Its function is as follows. May act as a scaffolding protein within caveolar membranes, functionally participating in formation of caveolae or caveolae-like vesicles. The sequence is that of Flotillin-1 (Flot1) from Mus musculus (Mouse).